A 462-amino-acid polypeptide reads, in one-letter code: 3-oxoacyl-[acyl-carrier-protein] synthase I, chloroplastic (462 aa).

A chloroplast-targeting transit peptide spans methionine 1 to alanine 35. The disordered stretch occupies residues methionine 1–aspartate 45. The segment covering proline 19–proline 29 has biased composition (basic residues). Over residues alanine 30–alanine 39 the composition is skewed to low complexity. In terms of domain architecture, Ketosynthase family 3 (KS3) spans arginine 47 to proline 459. Active-site for beta-ketoacyl synthase activity residues include cysteine 213, histidine 353, and histidine 389.

This sequence belongs to the thiolase-like superfamily. Beta-ketoacyl-ACP synthases family. As to quaternary structure, homodimer.

Its subcellular location is the plastid. The protein localises to the chloroplast. The catalysed reaction is a fatty acyl-[ACP] + malonyl-[ACP] + H(+) = a 3-oxoacyl-[ACP] + holo-[ACP] + CO2. Its function is as follows. Catalyzes the condensation reaction of fatty acid synthesis by the addition to an acyl acceptor of two carbons from malonyl-ACP. Specific for elongation from C-10 to unsaturated C-16 and C-18 fatty acids. This Hordeum vulgare (Barley) protein is 3-oxoacyl-[acyl-carrier-protein] synthase I, chloroplastic (KAS12).